A 947-amino-acid polypeptide reads, in one-letter code: Translation initiation factor IF-2 (947 aa).

Residues 55 to 361 (TKDAQAGSAK…PVTERKFHEL (307 aa)) are disordered. The span at 63-73 (AKDKQVAEQKA) shows a compositional bias: basic and acidic residues. Low complexity predominate over residues 76–90 (AKATTPQPAAATQEA). Basic and acidic residues-rich tracts occupy residues 103–116 (FKAEREARAKEQAA), 125–134 (SNDRKSDYRQ), and 170–183 (NDGHRQAGNRDKNR). Residues 190 to 204 (RQQDTGRQGQTQAGA) are compositionally biased toward low complexity. 3 stretches are compositionally biased toward basic and acidic residues: residues 225-249 (ARQRESRFREQEEAKRLEQQARQEA), 257-267 (QTEDKKHREAS), and 294-311 (NRPDKGHDRDHGLEDGQK). The span at 316–334 (SWNSQNQVRNQKNSNWNNN) shows a compositional bias: low complexity. Residues 335–345 (KKNKKGKHHKN) are compositionally biased toward basic residues. In terms of domain architecture, tr-type G spans 448–617 (ERAPVVTIMG…LLVAEVEELK (170 aa)). Residues 457-464 (GHVDHGKT) are G1. Residue 457–464 (GHVDHGKT) participates in GTP binding. Residues 482–486 (GITQH) are G2. The interval 503–506 (DTPG) is G3. GTP-binding positions include 503–507 (DTPGH) and 557–560 (NKID). The segment at 557-560 (NKID) is G4. Positions 593-595 (SAK) are G5.

This sequence belongs to the TRAFAC class translation factor GTPase superfamily. Classic translation factor GTPase family. IF-2 subfamily.

It is found in the cytoplasm. Functionally, one of the essential components for the initiation of protein synthesis. Protects formylmethionyl-tRNA from spontaneous hydrolysis and promotes its binding to the 30S ribosomal subunits. Also involved in the hydrolysis of GTP during the formation of the 70S ribosomal complex. The sequence is that of Translation initiation factor IF-2 from Streptococcus equi subsp. zooepidemicus (strain MGCS10565).